Here is a 932-residue protein sequence, read N- to C-terminus: Protein translocase subunit SecA (932 aa).

ATP contacts are provided by residues Q87, 105–109 (GEGKT), and D515. C916, C918, C927, and H928 together coordinate Zn(2+).

The protein belongs to the SecA family. Monomer and homodimer. Part of the essential Sec protein translocation apparatus which comprises SecA, SecYEG and auxiliary proteins SecDF-YajC and YidC. Zn(2+) is required as a cofactor.

The protein resides in the cell inner membrane. Its subcellular location is the cytoplasm. The enzyme catalyses ATP + H2O + cellular proteinSide 1 = ADP + phosphate + cellular proteinSide 2.. Its function is as follows. Part of the Sec protein translocase complex. Interacts with the SecYEG preprotein conducting channel. Has a central role in coupling the hydrolysis of ATP to the transfer of proteins into and across the cell membrane, serving both as a receptor for the preprotein-SecB complex and as an ATP-driven molecular motor driving the stepwise translocation of polypeptide chains across the membrane. The protein is Protein translocase subunit SecA of Burkholderia orbicola (strain MC0-3).